A 294-amino-acid chain; its full sequence is uncharacterized protein (294 aa).

The protein belongs to the glycosyltransferase 2 family. WaaE/KdtX subfamily.

This is an uncharacterized protein from Rickettsia bellii (strain RML369-C).